A 449-amino-acid polypeptide reads, in one-letter code: uncharacterized protein (449 aa).

The protein localises to the mitochondrion. This is an uncharacterized protein from Podospora anserina (strain S / ATCC MYA-4624 / DSM 980 / FGSC 10383) (Pleurage anserina).